Reading from the N-terminus, the 145-residue chain is ATP synthase epsilon chain (145 aa).

This sequence belongs to the ATPase epsilon chain family. As to quaternary structure, F-type ATPases have 2 components, CF(1) - the catalytic core - and CF(0) - the membrane proton channel. CF(1) has five subunits: alpha(3), beta(3), gamma(1), delta(1), epsilon(1). CF(0) has three main subunits: a, b and c.

It localises to the cell inner membrane. Functionally, produces ATP from ADP in the presence of a proton gradient across the membrane. The sequence is that of ATP synthase epsilon chain from Francisella tularensis subsp. tularensis (strain FSC 198).